Reading from the N-terminus, the 465-residue chain is Cysteine--tRNA ligase (465 aa).

C30 provides a ligand contact to Zn(2+). The short motif at 32-42 (PTVYDRAHLGN) is the 'HIGH' region element. Zn(2+)-binding residues include C213, H238, and E242. The short motif at 271–275 (KMSKS) is the 'KMSKS' region element. K274 provides a ligand contact to ATP.

Belongs to the class-I aminoacyl-tRNA synthetase family. As to quaternary structure, monomer. The cofactor is Zn(2+).

The protein resides in the cytoplasm. It catalyses the reaction tRNA(Cys) + L-cysteine + ATP = L-cysteinyl-tRNA(Cys) + AMP + diphosphate. This is Cysteine--tRNA ligase from Ruegeria pomeroyi (strain ATCC 700808 / DSM 15171 / DSS-3) (Silicibacter pomeroyi).